Reading from the N-terminus, the 322-residue chain is Acetyl-coenzyme A carboxylase carboxyl transferase subunit alpha (322 aa).

The CoA carboxyltransferase C-terminal domain occupies 43–297 (ALKSKSNALT…KEVLTQQLNK (255 aa)).

Belongs to the AccA family. In terms of assembly, acetyl-CoA carboxylase is a heterohexamer composed of biotin carboxyl carrier protein (AccB), biotin carboxylase (AccC) and two subunits each of ACCase subunit alpha (AccA) and ACCase subunit beta (AccD).

Its subcellular location is the cytoplasm. The catalysed reaction is N(6)-carboxybiotinyl-L-lysyl-[protein] + acetyl-CoA = N(6)-biotinyl-L-lysyl-[protein] + malonyl-CoA. It participates in lipid metabolism; malonyl-CoA biosynthesis; malonyl-CoA from acetyl-CoA: step 1/1. Component of the acetyl coenzyme A carboxylase (ACC) complex. First, biotin carboxylase catalyzes the carboxylation of biotin on its carrier protein (BCCP) and then the CO(2) group is transferred by the carboxyltransferase to acetyl-CoA to form malonyl-CoA. This chain is Acetyl-coenzyme A carboxylase carboxyl transferase subunit alpha, found in Vesicomyosocius okutanii subsp. Calyptogena okutanii (strain HA).